Here is a 243-residue protein sequence, read N- to C-terminus: UMP-CMP kinase 1 (243 aa).

29–34 (GSGKGT) contacts ATP. The segment at 49 to 78 (SAGDLLREEAKYDTEQGTMIKNLMNEGKLV) is NMP. A ribonucleoside 5'-phosphate is bound by residues Arg55, 76 to 78 (KLV), and 103 to 106 (GFPR). Asn110 serves as a coordination point for CMP. An LID region spans residues 141–149 (NRNQGRDDD). An ATP-binding site is contributed by Arg142. A ribonucleoside 5'-phosphate-binding residues include Arg146 and Arg157. Arg185 contributes to the ATP binding site.

This sequence belongs to the adenylate kinase family. UMP-CMP kinase subfamily. As to quaternary structure, monomer. The cofactor is Mg(2+).

Its subcellular location is the cytoplasm. The protein resides in the nucleus. The enzyme catalyses UMP + ATP = UDP + ADP. The catalysed reaction is CMP + ATP = CDP + ADP. It carries out the reaction dCMP + ATP = dCDP + ADP. Functionally, catalyzes the phosphorylation of pyrimidine nucleoside monophosphates at the expense of ATP. Plays an important role in de novo pyrimidine nucleotide biosynthesis. Has preference for UMP and CMP as phosphate acceptors. The sequence is that of UMP-CMP kinase 1 from Oryza sativa subsp. japonica (Rice).